Reading from the N-terminus, the 157-residue chain is Small ribosomal subunit protein uS7 (157 aa).

Belongs to the universal ribosomal protein uS7 family. In terms of assembly, part of the 30S ribosomal subunit. Contacts proteins S9 and S11.

Its function is as follows. One of the primary rRNA binding proteins, it binds directly to 16S rRNA where it nucleates assembly of the head domain of the 30S subunit. Is located at the subunit interface close to the decoding center, probably blocks exit of the E-site tRNA. In Chlamydia abortus (strain DSM 27085 / S26/3) (Chlamydophila abortus), this protein is Small ribosomal subunit protein uS7.